The chain runs to 339 residues: Methylcobamide:CoM methyltransferase MtaA (339 aa).

The Zn(2+) site is built by His237, Cys239, and Cys316.

The protein belongs to the uroporphyrinogen decarboxylase family. MtbA/mtaA subfamily. Zn(2+) serves as cofactor.

The enzyme catalyses methyl-Co(III)-[methanol-specific corrinoid protein] + coenzyme M = Co(I)-[methanol-specific corrinoid protein] + methyl-coenzyme M + H(+). Functionally, methyltransferase involved in methanogenesis in the methanol pathway. Catalyzes the transfer of the methyl group from the methylated corrinoid protein MtaC to coenzyme M, forming the substrate for coenzyme-B sulfoethylthiotransferase. MtaC can be substituted by free cob(I)alamin in vitro. The chain is Methylcobamide:CoM methyltransferase MtaA (mtaA) from Methanosarcina barkeri.